The primary structure comprises 267 residues: Mannose-specific lectin 1 (267 aa).

The first 24 residues, 1–24 (MAKSLVLSSLLLALLLAAPLASLA), serve as a signal peptide directing secretion. Bulb-type lectin domains lie at 26-136 (NNVL…APNR) and 150-260 (RNVL…SPAR). 2 disulfide bridges follow: Cys54–Cys76 and Cys178–Cys203.

In terms of assembly, heterotetramer of 2 domain 1 and 2 domain 2 chains arranged as a dimer of domain 1/domain 2 heterodimers.

Its function is as follows. Mannose-specific lectin. Has weak agglutinating activity towards trypsin-treated erythrocytes from rabbit but not from human. This is Mannose-specific lectin 1 from Crocus vernus (Dutch crocus).